We begin with the raw amino-acid sequence, 205 residues long: Holliday junction branch migration complex subunit RuvA (205 aa).

The tract at residues 1–64 (MIGRIRGLLI…EDAQLLYGFI (64 aa)) is domain I. The domain II stretch occupies residues 65-143 (SKQERSLFRL…SLMEASVGSE (79 aa)). The segment at 144 to 156 (REFMLQSNYTAPE) is flexible linker. The domain III stretch occupies residues 157–205 (AVNTAEEDAIAALLSLGYKPAQASKAVSSVYTDGMSSETLIKSALKSML).

The protein belongs to the RuvA family. In terms of assembly, homotetramer. Forms an RuvA(8)-RuvB(12)-Holliday junction (HJ) complex. HJ DNA is sandwiched between 2 RuvA tetramers; dsDNA enters through RuvA and exits via RuvB. An RuvB hexamer assembles on each DNA strand where it exits the tetramer. Each RuvB hexamer is contacted by two RuvA subunits (via domain III) on 2 adjacent RuvB subunits; this complex drives branch migration. In the full resolvosome a probable DNA-RuvA(4)-RuvB(12)-RuvC(2) complex forms which resolves the HJ.

The protein localises to the cytoplasm. Functionally, the RuvA-RuvB-RuvC complex processes Holliday junction (HJ) DNA during genetic recombination and DNA repair, while the RuvA-RuvB complex plays an important role in the rescue of blocked DNA replication forks via replication fork reversal (RFR). RuvA specifically binds to HJ cruciform DNA, conferring on it an open structure. The RuvB hexamer acts as an ATP-dependent pump, pulling dsDNA into and through the RuvAB complex. HJ branch migration allows RuvC to scan DNA until it finds its consensus sequence, where it cleaves and resolves the cruciform DNA. The polypeptide is Holliday junction branch migration complex subunit RuvA (Shewanella halifaxensis (strain HAW-EB4)).